The chain runs to 1404 residues: Clustered mitochondria protein homolog (1404 aa).

The region spanning 357-646 (HTHHADALRS…RLNPVDINWL (290 aa)) is the Clu domain. Over residues 528–540 (ADELPEADGETTE) the composition is skewed to acidic residues. 4 disordered regions span residues 528–561 (ADEL…SNKA), 706–735 (DAKA…ERLD), 996–1046 (GCHG…ARAT), and 1337–1372 (SERQ…GNGT). Residues 706 to 723 (DAKAKEAASKEDGEKTEA) are compositionally biased toward basic and acidic residues. Composition is skewed to low complexity over residues 1021-1046 (NEQQ…ARAT) and 1358-1372 (AAIT…GNGT).

Belongs to the CLU family. As to quaternary structure, may associate with the eukaryotic translation initiation factor 3 (eIF-3) complex.

It localises to the cytoplasm. Its function is as follows. mRNA-binding protein involved in proper cytoplasmic distribution of mitochondria. The polypeptide is Clustered mitochondria protein homolog (Mycosarcoma maydis (Corn smut fungus)).